A 314-amino-acid polypeptide reads, in one-letter code: Putative 4-hydroxy-2-oxoglutarate aldolase, mitochondrial (314 aa).

A substrate-binding site is contributed by 50 to 51 (TN). The active-site Schiff-base intermediate with substrate is Lys-171.

The protein belongs to the DapA family.

The catalysed reaction is (4S)-4-hydroxy-2-oxoglutarate = glyoxylate + pyruvate. It carries out the reaction (4R)-4-hydroxy-2-oxoglutarate = glyoxylate + pyruvate. In terms of biological role, may catalyze the final step in the metabolic pathway of hydroxyproline. The protein is Putative 4-hydroxy-2-oxoglutarate aldolase, mitochondrial of Coccidioides immitis (strain RS) (Valley fever fungus).